A 468-amino-acid polypeptide reads, in one-letter code: uncharacterized protein (468 aa).

The TRAM domain maps to 3–61; that stretch reads TFANGMTLDVTVDALAPGGKAVCRHEGRVIFVDRGLPGQQLHVRLTTVRKRFAEAECLA. C74, C80, C83, and C162 together coordinate [4Fe-4S] cluster. S-adenosyl-L-methionine is bound by residues Q288, Y317, E338, and D389. The active-site Nucleophile is the C416.

Belongs to the class I-like SAM-binding methyltransferase superfamily. RNA M5U methyltransferase family.

This is an uncharacterized protein from Nitratidesulfovibrio vulgaris (strain ATCC 29579 / DSM 644 / CCUG 34227 / NCIMB 8303 / VKM B-1760 / Hildenborough) (Desulfovibrio vulgaris).